The following is a 186-amino-acid chain: Ribosome-recycling factor (186 aa).

This sequence belongs to the RRF family.

It localises to the cytoplasm. Responsible for the release of ribosomes from messenger RNA at the termination of protein biosynthesis. May increase the efficiency of translation by recycling ribosomes from one round of translation to another. The chain is Ribosome-recycling factor from Burkholderia cenocepacia (strain HI2424).